The sequence spans 364 residues: Pre-mRNA-splicing factor SLT11 (364 aa).

The disordered stretch occupies residues 331 to 364; the sequence is KSTDNAKNDKKKTSKKVHKDRSKKSKPRANKLTI. Basic residues predominate over residues 339–364; the sequence is DKKKTSKKVHKDRSKKSKPRANKLTI.

The protein belongs to the SLT11 family. In terms of assembly, belongs to the CWC complex (or CEF1-associated complex), a spliceosome subcomplex composed of the U2, U5 and U6 snRNAs and at least BUD13, BUD31, BRR2, CDC40, CEF1, CLF1, CUS1, CWC2, CWC15, CWC21, CWC22, CWC23, CWC24, CWC25, CWC27, ECM2, HSH155, IST3, ISY1, LEA1, MSL1, NTC20, PRP8, PRP9, PRP11, PRP19, PRP21, PRP22, PRP45, PRP46, SLU7, SMB1, SMD1, SMD2, SMD3, SMX2, SMX3, SNT309, SNU114, SPP2, SYF1, SYF2, RSE1 and YJU2. Interacts with SLU7.

It is found in the nucleus. Functionally, involved in pre-mRNA splicing. Facilitates the cooperative formation of U2/U6 helix II in association with stem II in the spliceosome. Binds to RNA. In Saccharomyces cerevisiae (strain ATCC 204508 / S288c) (Baker's yeast), this protein is Pre-mRNA-splicing factor SLT11 (ECM2).